Reading from the N-terminus, the 65-residue chain is Bucain (65 aa).

Disulfide bonds link cysteine 3–cysteine 24, cysteine 17–cysteine 42, cysteine 46–cysteine 57, and cysteine 58–cysteine 63.

This sequence belongs to the three-finger toxin family. Short-chain subfamily. Orphan group III sub-subfamily. In terms of tissue distribution, expressed by the venom gland.

The protein resides in the secreted. In Bungarus candidus (Malayan krait), this protein is Bucain.